The following is a 200-amino-acid chain: Protein GrpE (200 aa).

A disordered region spans residues 15-47; that stretch reads DLEMDLNEEELEESEVNEDKEFEELDKSEEENE. Residues 16–47 show a composition bias toward acidic residues; it reads LEMDLNEEELEESEVNEDKEFEELDKSEEENE.

This sequence belongs to the GrpE family. As to quaternary structure, homodimer.

Its subcellular location is the cytoplasm. Participates actively in the response to hyperosmotic and heat shock by preventing the aggregation of stress-denatured proteins, in association with DnaK and GrpE. It is the nucleotide exchange factor for DnaK and may function as a thermosensor. Unfolded proteins bind initially to DnaJ; upon interaction with the DnaJ-bound protein, DnaK hydrolyzes its bound ATP, resulting in the formation of a stable complex. GrpE releases ADP from DnaK; ATP binding to DnaK triggers the release of the substrate protein, thus completing the reaction cycle. Several rounds of ATP-dependent interactions between DnaJ, DnaK and GrpE are required for fully efficient folding. The chain is Protein GrpE from Clostridium tetani (strain Massachusetts / E88).